Consider the following 1088-residue polypeptide: Neural cell adhesion molecule 1-A (1088 aa).

Residues 1–19 form the signal peptide; sequence MLHIKDLIWTLYFIGTAVA. Ig-like C2-type domains lie at 20-108, 113-202, 209-294, 303-397, and 400-484; these read LEVN…GTVN, QKLT…KDIQ, PTIQ…AEAT, PKIT…FEVQ, and PKIR…HEFS. The Extracellular segment spans residues 20 to 705; the sequence is LEVNIVPDQG…TASAGTGLGT (686 aa). 2 disulfides stabilise this stretch: cysteine 41–cysteine 93 and cysteine 136–cysteine 186. Asparagine 82 carries N-linked (GlcNAc...) asparagine glycosylation. Heparin contacts are provided by residues 149–153 and 158–162; these read RHKGK and KKDVR. N-linked (GlcNAc...) asparagine glycosylation occurs at asparagine 219. Residues cysteine 232 and cysteine 282 are joined by a disulfide bond. Asparagine 310, asparagine 341, asparagine 417, asparagine 443, and asparagine 472 each carry an N-linked (GlcNAc...) asparagine glycan. Residues cysteine 323 and cysteine 379 are joined by a disulfide bond. Cysteine 420 and cysteine 473 are oxidised to a cystine. Fibronectin type-III domains lie at 493–592 and 594–690; these read TPSS…TQPV and EPSA…TAKP. The chain crosses the membrane as a helical span at residues 706–723; the sequence is GAIVGILIVIFVLLLVVV. The Cytoplasmic segment spans residues 724 to 1088; it reads DVTCFFLNKC…TQTNANESKA (365 aa). Residues 758-784 are compositionally biased toward basic and acidic residues; that stretch reads EGKAAFSKDESKEPIVEVRTEEERTPN. 3 disordered regions span residues 758 to 802, 829 to 1000, and 1024 to 1088; these read EGKA…LTEP, FATA…DGGT, and VASG…ESKA. 3 stretches are compositionally biased toward low complexity: residues 835 to 847, 854 to 875, and 913 to 936; these read SPTS…TSST, APDS…APTT, and PSAA…VPPN. Positions 965–974 are enriched in polar residues; the sequence is QPSTVKNPTE. A compositionally biased stretch (basic and acidic residues) spans 1046–1064; sequence AKTEKTQVEEKSKPEEIDV. The segment covering 1076–1088 has biased composition (polar residues); the sequence is NEATQTNANESKA.

Post-translationally, polysialylated by ST8SIA2 and ST8SIA4. Polysialylation modulates cell interactions by confering both attractive and repulsive properties that are highly regulated by ST8SIA2 and ST8SIA4. Polysialylation is formed on a-2,3-linked sialic acid of core glycans. In terms of tissue distribution, expressed in neuron and in presumptive neural tissue.

Its subcellular location is the cell membrane. This protein is a cell adhesion molecule involved in neuron-neuron adhesion, neurite fasciculation, outgrowth of neurites, etc. This is Neural cell adhesion molecule 1-A from Xenopus laevis (African clawed frog).